The primary structure comprises 200 residues: NADH-quinone oxidoreductase subunit B (200 aa).

4 residues coordinate [4Fe-4S] cluster: cysteine 78, cysteine 79, cysteine 144, and cysteine 174.

The protein belongs to the complex I 20 kDa subunit family. As to quaternary structure, NDH-1 is composed of 14 different subunits. Subunits NuoB, C, D, E, F, and G constitute the peripheral sector of the complex. [4Fe-4S] cluster is required as a cofactor.

The protein resides in the cell membrane. The catalysed reaction is a quinone + NADH + 5 H(+)(in) = a quinol + NAD(+) + 4 H(+)(out). NDH-1 shuttles electrons from NADH, via FMN and iron-sulfur (Fe-S) centers, to quinones in the respiratory chain. The immediate electron acceptor for the enzyme in this species is believed to be ubiquinone. Couples the redox reaction to proton translocation (for every two electrons transferred, four hydrogen ions are translocated across the cytoplasmic membrane), and thus conserves the redox energy in a proton gradient. In Dehalococcoides mccartyi (strain ATCC BAA-2100 / JCM 16839 / KCTC 5957 / BAV1), this protein is NADH-quinone oxidoreductase subunit B.